Here is an 84-residue protein sequence, read N- to C-terminus: Serine protease inhibitor Kazal-type 2 (84 aa).

The signal sequence occupies residues 1 to 23 (MALSVLRLALLLLAVTFAASLIP). Gln-24 is subject to Pyrrolidone carboxylic acid. Residues 30 to 84 (KYRTPNCSQYRLPGCPRHFNPVCGSDMSTYANECTLCMKIREGGHNIKIIRNGPC) form the Kazal-like domain. Disulfide bonds link Cys-36-Cys-66, Cys-44-Cys-63, and Cys-52-Cys-84.

Expressed in epididymis (at protein level).

It is found in the secreted. Its subcellular location is the cytoplasmic vesicle. It localises to the secretory vesicle. The protein resides in the acrosome. Functionally, as a strong inhibitor of acrosin, it is required for normal spermiogenesis. It probably hinders premature activation of proacrosin and other proteases, thus preventing the cascade of events leading to spermiogenesis defects. May be involved in the regulation of serine protease-dependent germ cell apoptosis. It also inhibits trypsin. The protein is Serine protease inhibitor Kazal-type 2 (SPINK2) of Homo sapiens (Human).